Reading from the N-terminus, the 615-residue chain is DNA mismatch repair protein MutL (615 aa).

The segment at 370–397 is disordered; sequence EPVAPRYTPAPASGSRPAAPWPNTQPGY. Residues 378–391 show a composition bias toward low complexity; the sequence is PAPASGSRPAAPWP.

It belongs to the DNA mismatch repair MutL/HexB family.

Functionally, this protein is involved in the repair of mismatches in DNA. It is required for dam-dependent methyl-directed DNA mismatch repair. May act as a 'molecular matchmaker', a protein that promotes the formation of a stable complex between two or more DNA-binding proteins in an ATP-dependent manner without itself being part of a final effector complex. The chain is DNA mismatch repair protein MutL from Shigella dysenteriae serotype 1 (strain Sd197).